A 179-amino-acid chain; its full sequence is MDIILLERINRLGQIGDIVSVKDGYARNFLLPKGKALRANEANKKFFETQRIKLEARNLECKNEAQKIAERLNGKSFIVVRSAGETGQLYGSVSTRDITDIITMDGFSIERNQIELNHPIKTIGLHPVTLNLHPEVQISVTIHVARSANEAQLQEEAKILTSVEATEIVQEQPLEENIG.

It belongs to the bacterial ribosomal protein bL9 family.

Binds to the 23S rRNA. In Bartonella bacilliformis (strain ATCC 35685 / KC583 / Herrer 020/F12,63), this protein is Large ribosomal subunit protein bL9.